Consider the following 545-residue polypeptide: Transducer protein Htr7 (545 aa).

3 helical membrane-spanning segments follow: residues 10–30, 44–64, and 80–100; these read AVVA…AAAL, FWMA…SLML, and PLMA…LAIV. The interval 111-157 is disordered; that stretch reads AQRRQEAEEERAEAERAREKAEQKQAEAERQTAEAESAKQDARERSA. Over residues 123-157 the composition is skewed to basic and acidic residues; the sequence is EAERAREKAEQKQAEAERQTAEAESAKQDARERSA. An HAMP domain is found at 164 to 217; it reads ADLESQATEVGATLEAASDGDLTARVDATTDNAEIAEVATVVNDMLTTMERTID. The 241-residue stretch at 236-476 folds into the Methyl-accepting transducer domain; the sequence is GAKEIQDASQ…RVVSSVDDIA (241 aa). Position 281 is a glutamate methyl ester (Glu) (Glu-281). Residues 521 to 545 form a disordered region; it reads LNEFRTEATGTAHGEATDAPAGQSD. Positions 527-539 are enriched in low complexity; the sequence is EATGTAHGEATDA.

It belongs to the methyl-accepting chemotaxis (MCP) protein family. Methylated by CheR.

It is found in the cell membrane. In terms of biological role, potentially involved in chemo- or phototactic signal transduction. This is Transducer protein Htr7 (htr7) from Halobacterium salinarum (strain ATCC 29341 / DSM 671 / R1).